Consider the following 619-residue polypeptide: UPF0329 protein ECU08_2070 (619 aa).

Composition is skewed to basic and acidic residues over residues 350–359 (EREKREESKG) and 369–385 (GAGEAKEESKEEDRKEE). Positions 350 to 425 (EREKREESKG…REKKMGEEHH (76 aa)) are disordered. Residues 386–396 (EGVEVEEEESA) are compositionally biased toward acidic residues.

This sequence belongs to the UPF0329 family.

This chain is UPF0329 protein ECU08_2070, found in Encephalitozoon cuniculi (strain GB-M1) (Microsporidian parasite).